A 235-amino-acid chain; its full sequence is Large ribosomal subunit protein uL1 (235 aa).

The protein belongs to the universal ribosomal protein uL1 family. Part of the 50S ribosomal subunit.

Its function is as follows. Binds directly to 23S rRNA. The L1 stalk is quite mobile in the ribosome, and is involved in E site tRNA release. Functionally, protein L1 is also a translational repressor protein, it controls the translation of the L11 operon by binding to its mRNA. The protein is Large ribosomal subunit protein uL1 of Rhodospirillum centenum (strain ATCC 51521 / SW).